A 542-amino-acid chain; its full sequence is GMP synthase [glutamine-hydrolyzing] (542 aa).

A Glutamine amidotransferase type-1 domain is found at 28–218 (MLVILDFGSQ…VYHICQCEPT (191 aa)). The Nucleophile role is filled by Cys-105. Residues His-192 and Glu-194 contribute to the active site. In terms of domain architecture, GMPS ATP-PPase spans 219 to 417 (WTTEAFVEES…IGLPEEIVRR (199 aa)). 246–252 (SGGVDSS) is a binding site for ATP.

Homodimer.

The enzyme catalyses XMP + L-glutamine + ATP + H2O = GMP + L-glutamate + AMP + diphosphate + 2 H(+). It functions in the pathway purine metabolism; GMP biosynthesis; GMP from XMP (L-Gln route): step 1/1. Functionally, catalyzes the synthesis of GMP from XMP. This is GMP synthase [glutamine-hydrolyzing] from Rippkaea orientalis (strain PCC 8801 / RF-1) (Cyanothece sp. (strain PCC 8801)).